Reading from the N-terminus, the 363-residue chain is Mitogen-activated protein kinase 12 (363 aa).

The 285-residue stretch at 25-309 (YKDLKQVGTG…AAEALAFPFF (285 aa)) folds into the Protein kinase domain. ATP contacts are provided by residues 31-39 (VGTGAYGTV) and K54. The active-site Proton acceptor is D151. T181 is modified (phosphothreonine). A TXY motif is present at residues 181-183 (TGY). Y183 bears the Phosphotyrosine mark.

This sequence belongs to the protein kinase superfamily. CMGC Ser/Thr protein kinase family. MAP kinase subfamily. Mg(2+) is required as a cofactor. In terms of processing, dually phosphorylated on Thr-181 and Tyr-183, which activates the enzyme.

Its subcellular location is the cytoplasm. It catalyses the reaction L-seryl-[protein] + ATP = O-phospho-L-seryl-[protein] + ADP + H(+). The catalysed reaction is L-threonyl-[protein] + ATP = O-phospho-L-threonyl-[protein] + ADP + H(+). Its activity is regulated as follows. Activated by threonine and tyrosine phosphorylation. Its function is as follows. Serine/threonine kinase which acts as an essential component of the MAP kinase signal transduction pathway. MAPK12 is one of the four p38 MAPKs which play an important role in the cascades of cellular responses evoked by extracellular stimuli such as pro-inflammatory cytokines or physical stress leading to direct activation of transcription factors. Accordingly, p38 MAPKs phosphorylate a broad range of proteins and it has been estimated that they may have approximately 200 to 300 substrates each. Some of the targets are downstream kinases such as MAPKAPK2, which are activated through phosphorylation and further phosphorylate additional targets. The protein is Mitogen-activated protein kinase 12 (mapk12) of Danio rerio (Zebrafish).